The chain runs to 504 residues: UDP-N-acetylmuramoylalanine--D-glutamate ligase (504 aa).

132 to 138 (GTNGKTT) contacts ATP. The segment at 284-310 (AQDRDATDEPAPTRRRKSESTAPPDIG) is disordered.

The protein belongs to the MurCDEF family.

It localises to the cytoplasm. The catalysed reaction is UDP-N-acetyl-alpha-D-muramoyl-L-alanine + D-glutamate + ATP = UDP-N-acetyl-alpha-D-muramoyl-L-alanyl-D-glutamate + ADP + phosphate + H(+). It participates in cell wall biogenesis; peptidoglycan biosynthesis. In terms of biological role, cell wall formation. Catalyzes the addition of glutamate to the nucleotide precursor UDP-N-acetylmuramoyl-L-alanine (UMA). The chain is UDP-N-acetylmuramoylalanine--D-glutamate ligase from Paraburkholderia phymatum (strain DSM 17167 / CIP 108236 / LMG 21445 / STM815) (Burkholderia phymatum).